Consider the following 200-residue polypeptide: GTP cyclohydrolase 1 (200 aa).

Zn(2+)-binding residues include C87, H90, and C158.

This sequence belongs to the GTP cyclohydrolase I family. Toroid-shaped homodecamer, composed of two pentamers of five dimers.

It catalyses the reaction GTP + H2O = 7,8-dihydroneopterin 3'-triphosphate + formate + H(+). The protein operates within cofactor biosynthesis; 7,8-dihydroneopterin triphosphate biosynthesis; 7,8-dihydroneopterin triphosphate from GTP: step 1/1. The sequence is that of GTP cyclohydrolase 1 from Xanthomonas axonopodis pv. citri (strain 306).